We begin with the raw amino-acid sequence, 328 residues long: UDP-glucose 4-epimerase (328 aa).

Thr-119 is a substrate binding site. Tyr-143 functions as the Proton acceptor in the catalytic mechanism.

The protein belongs to the NAD(P)-dependent epimerase/dehydratase family. The cofactor is NAD(+).

It catalyses the reaction UDP-alpha-D-glucose = UDP-alpha-D-galactose. It participates in carbohydrate metabolism; galactose metabolism. It functions in the pathway glycan metabolism; exopolysaccharide biosynthesis. The polypeptide is UDP-glucose 4-epimerase (exoB) (Rhizobium meliloti (strain 1021) (Ensifer meliloti)).